The following is a 377-amino-acid chain: Spore coat protein SA (377 aa).

The protein belongs to the glycosyltransferase group 1 family. Glycosyltransferase 4 subfamily.

This Bacillus subtilis (strain 168) protein is Spore coat protein SA (cotSA).